Here is a 180-residue protein sequence, read N- to C-terminus: Inner membrane-spanning protein YciB (180 aa).

6 helical membrane passes run 4 to 24 (LLSEIGPVIAFFAGFFYGGGI), 25 to 45 (QHATLYMLITSVICITLCYVI), 49 to 69 (VSKLSIISTTVLLVSGSITLI), 76 to 96 (IKIKPTILYVIFGIIFLMSGI), 118 to 138 (ITLSYRTAAFFFFMAVVNEVV), and 150 to 170 (FKVFGVIPITFIFILLQLPLL).

The protein belongs to the YciB family.

It localises to the cell inner membrane. Its function is as follows. Plays a role in cell envelope biogenesis, maintenance of cell envelope integrity and membrane homeostasis. The polypeptide is Inner membrane-spanning protein YciB (Rickettsia africae (strain ESF-5)).